The following is a 136-amino-acid chain: Protein NrdI (136 aa).

Belongs to the NrdI family.

Probably involved in ribonucleotide reductase function. This is Protein NrdI from Shigella boydii serotype 4 (strain Sb227).